The sequence spans 166 residues: Endoribonuclease YbeY (166 aa).

The Zn(2+) site is built by His126, His130, and His136.

The protein belongs to the endoribonuclease YbeY family. Zn(2+) serves as cofactor.

It is found in the cytoplasm. Its function is as follows. Single strand-specific metallo-endoribonuclease involved in late-stage 70S ribosome quality control and in maturation of the 3' terminus of the 16S rRNA. This Laribacter hongkongensis (strain HLHK9) protein is Endoribonuclease YbeY.